The chain runs to 160 residues: ATP synthase subunit b (160 aa).

Residues 13–33 (VNLAIVIGVLVWFLRGFLGGI) traverse the membrane as a helical segment.

It belongs to the ATPase B chain family. As to quaternary structure, F-type ATPases have 2 components, F(1) - the catalytic core - and F(0) - the membrane proton channel. F(1) has five subunits: alpha(3), beta(3), gamma(1), delta(1), epsilon(1). F(0) has four main subunits: a(1), b(1), b'(1) and c(10-14). The alpha and beta chains form an alternating ring which encloses part of the gamma chain. F(1) is attached to F(0) by a central stalk formed by the gamma and epsilon chains, while a peripheral stalk is formed by the delta, b and b' chains.

Its subcellular location is the cellular thylakoid membrane. In terms of biological role, f(1)F(0) ATP synthase produces ATP from ADP in the presence of a proton or sodium gradient. F-type ATPases consist of two structural domains, F(1) containing the extramembraneous catalytic core and F(0) containing the membrane proton channel, linked together by a central stalk and a peripheral stalk. During catalysis, ATP synthesis in the catalytic domain of F(1) is coupled via a rotary mechanism of the central stalk subunits to proton translocation. Functionally, component of the F(0) channel, it forms part of the peripheral stalk, linking F(1) to F(0). This Parasynechococcus marenigrum (strain WH8102) protein is ATP synthase subunit b.